The sequence spans 183 residues: Orotate phosphoribosyltransferase (183 aa).

5-phospho-alpha-D-ribose 1-diphosphate-binding positions include R21, K88, and 112 to 120; that span reads EDVVTTGES. Orotate-binding residues include T116 and R144.

This sequence belongs to the purine/pyrimidine phosphoribosyltransferase family. PyrE subfamily. Homodimer. Mg(2+) serves as cofactor.

It catalyses the reaction orotidine 5'-phosphate + diphosphate = orotate + 5-phospho-alpha-D-ribose 1-diphosphate. It participates in pyrimidine metabolism; UMP biosynthesis via de novo pathway; UMP from orotate: step 1/2. Its function is as follows. Catalyzes the transfer of a ribosyl phosphate group from 5-phosphoribose 1-diphosphate to orotate, leading to the formation of orotidine monophosphate (OMP). This chain is Orotate phosphoribosyltransferase, found in Thermus thermophilus (strain ATCC 27634 / DSM 579 / HB8).